The sequence spans 337 residues: ATP-dependent 6-phosphofructokinase (337 aa).

G11 is a binding site for ATP. 21-25 (RAVVR) serves as a coordination point for ADP. ATP is bound by residues 72 to 73 (RY) and 102 to 105 (GDGS). D103 serves as a coordination point for Mg(2+). A substrate-binding site is contributed by 125–127 (TID). The active-site Proton acceptor is D127. R154 is an ADP binding site. Residues R162 and 169–171 (MGR) each bind substrate. ADP-binding positions include 185 to 187 (GAD) and 214 to 216 (KNH). Residues E223, R245, and 251–254 (HILR) contribute to the substrate site.

The protein belongs to the phosphofructokinase type A (PFKA) family. ATP-dependent PFK group I subfamily. Prokaryotic clade 'B1' sub-subfamily. In terms of assembly, homotetramer. Requires Mg(2+) as cofactor.

The protein localises to the cytoplasm. It catalyses the reaction beta-D-fructose 6-phosphate + ATP = beta-D-fructose 1,6-bisphosphate + ADP + H(+). The protein operates within carbohydrate degradation; glycolysis; D-glyceraldehyde 3-phosphate and glycerone phosphate from D-glucose: step 3/4. Its activity is regulated as follows. Allosterically activated by ADP and other diphosphonucleosides, and allosterically inhibited by phosphoenolpyruvate. Its function is as follows. Catalyzes the phosphorylation of D-fructose 6-phosphate to fructose 1,6-bisphosphate by ATP, the first committing step of glycolysis. This Streptococcus mutans serotype c (strain ATCC 700610 / UA159) protein is ATP-dependent 6-phosphofructokinase.